Here is a 357-residue protein sequence, read N- to C-terminus: Peptide chain release factor 1 (357 aa).

The residue at position 234 (Gln-234) is an N5-methylglutamine. Residues 284-304 (RIEGERSEDRKSKIGTGDRSE) are disordered.

The protein belongs to the prokaryotic/mitochondrial release factor family. Post-translationally, methylated by PrmC. Methylation increases the termination efficiency of RF1.

It is found in the cytoplasm. Its function is as follows. Peptide chain release factor 1 directs the termination of translation in response to the peptide chain termination codons UAG and UAA. The polypeptide is Peptide chain release factor 1 (Pelagibacter ubique (strain HTCC1062)).